A 368-amino-acid polypeptide reads, in one-letter code: Quinolinate synthase (368 aa).

Iminosuccinate is bound by residues His-46 and Ser-63. Cys-110 lines the [4Fe-4S] cluster pocket. Residues 141–143 (YVN) and Ser-162 contribute to the iminosuccinate site. Residue Cys-230 coordinates [4Fe-4S] cluster. Iminosuccinate-binding positions include 256 to 258 (HPE) and Thr-273. Cys-320 contacts [4Fe-4S] cluster.

This sequence belongs to the quinolinate synthase family. Type 3 subfamily. [4Fe-4S] cluster serves as cofactor.

The protein localises to the cytoplasm. The catalysed reaction is iminosuccinate + dihydroxyacetone phosphate = quinolinate + phosphate + 2 H2O + H(+). The protein operates within cofactor biosynthesis; NAD(+) biosynthesis; quinolinate from iminoaspartate: step 1/1. Catalyzes the condensation of iminoaspartate with dihydroxyacetone phosphate to form quinolinate. This Bacillus cereus (strain ATCC 14579 / DSM 31 / CCUG 7414 / JCM 2152 / NBRC 15305 / NCIMB 9373 / NCTC 2599 / NRRL B-3711) protein is Quinolinate synthase.